Reading from the N-terminus, the 312-residue chain is Protoheme IX farnesyltransferase 1 (312 aa).

Helical transmembrane passes span 21–41, 53–73, 105–125, 127–147, 156–176, 182–202, 225–245, 246–266, and 292–312; these read GVLA…LLVT, IPSP…AGSA, SALV…ALGA, LLAA…YTLV, IVWG…AVTG, ALVM…SLAM, VSAR…LLVP, ATSW…LIVA, and LALL…SFVA.

This sequence belongs to the UbiA prenyltransferase family. Protoheme IX farnesyltransferase subfamily.

Its subcellular location is the cell membrane. The enzyme catalyses heme b + (2E,6E)-farnesyl diphosphate + H2O = Fe(II)-heme o + diphosphate. It functions in the pathway porphyrin-containing compound metabolism; heme O biosynthesis; heme O from protoheme: step 1/1. Functionally, converts heme B (protoheme IX) to heme O by substitution of the vinyl group on carbon 2 of heme B porphyrin ring with a hydroxyethyl farnesyl side group. The polypeptide is Protoheme IX farnesyltransferase 1 (Saccharopolyspora erythraea (strain ATCC 11635 / DSM 40517 / JCM 4748 / NBRC 13426 / NCIMB 8594 / NRRL 2338)).